Consider the following 642-residue polypeptide: Transmembrane 9 superfamily member 4 (642 aa).

The first 23 residues, 1 to 23, serve as a signal peptide directing secretion; that stretch reads MATAMDWLPWSLLLFSLMCETSA. Residues 24-281 are Extracellular-facing; the sequence is FYVPGVAPIN…TMSDVQIHWF (258 aa). A helical transmembrane segment spans residues 282 to 302; the sequence is SIINSVVVVFFLSGILSMIII. The Cytoplasmic segment spans residues 303–346; that stretch reads RTLRKDIANYNKEDDIEDTMEESGWKLVHGDVFRPPQYPMILSS. The residue at position 312 (Tyr-312) is a Phosphotyrosine. Residues 347–367 traverse the membrane as a helical segment; the sequence is LLGSGIQLFCMILIVIFVAML. Topologically, residues 368-376 are extracellular; it reads GMLSPSSRG. The chain crosses the membrane as a helical span at residues 377–397; sequence ALMTTACFLFMFMGVFGGFSA. Topologically, residues 398-416 are cytoplasmic; that stretch reads GRLYRTLKGHRWKKGAFCT. The helical transmembrane segment at 417–437 threads the bilayer; that stretch reads ATLYPGVVFGICFVLNCFIWG. The Extracellular segment spans residues 438–449; that stretch reads KHSSGAVPFPTM. The chain crosses the membrane as a helical span at residues 450 to 470; that stretch reads VALLCMWFGISLPLVYLGYYF. Over 471–501 the chain is Cytoplasmic; sequence GFRKQPYDNPVRTNQIPRQIPEQRWYMNRFV. Residues 502 to 522 form a helical membrane-spanning segment; sequence GILMAGILPFGAMFIELFFIF. Residues 523–535 lie on the Extracellular side of the membrane; it reads SAIWENQFYYLFG. A helical membrane pass occupies residues 536-556; that stretch reads FLFLVFIILVVSCSQISIVMV. The Cytoplasmic portion of the chain corresponds to 557 to 570; it reads YFQLCAEDYRWWWR. A helical membrane pass occupies residues 571–591; the sequence is NFLVSGGSAFYVLVYAIFYFV. Over 592-598 the chain is Extracellular; sequence NKLDIVE. A helical transmembrane segment spans residues 599–619; sequence FIPSLLYFGYTALMVLSFWLL. At 620–642 the chain is on the cytoplasmic side; that stretch reads TGTIGFYAAYMFVRKIYAAVKID.

The protein belongs to the nonaspanin (TM9SF) (TC 9.A.2) family. Interacts with ATP6V1H in colon cancer cells. As to expression, highly expressed in metastatic melanoma cells whereas it is undetectable in primary melanoma cells, healthy skin tissues and peripheral blood lymphocytes. Expressed in CD34(+) hematopoietic progenitor cells and during monocyte and granulocyte differentiation. Overexpressed in acute myeloid leukemia, in particular in those displaying granulocytic differentiation (at protein level).

The protein resides in the membrane. The protein localises to the golgi apparatus. It localises to the early endosome. Its function is as follows. Associates with proteins harboring glycine-rich transmembrane domains and ensures their efficient localization to the cell surface. Regulates the assembly and activity of V-ATPase in colon cancer cells via its interaction with V-type proton ATPase subunit H (ATP6V1H) and contributes to V-ATPase-mediated pH alterations in cancer cells which play an important role in drug resistance and invasiveness of colon cancer cells. Plays an important role in an atypical phagocytic activity of metastatic melanoma cells called cannibalism and is involved in the pH regulation of the intracellular vesicles in tumor cells. This chain is Transmembrane 9 superfamily member 4 (TM9SF4), found in Homo sapiens (Human).